Consider the following 183-residue polypeptide: RNA pyrophosphohydrolase (183 aa).

Residues 6–149 (GYRPNVGIIL…KREVYRLALE (144 aa)) form the Nudix hydrolase domain. The Nudix box motif lies at 38–59 (GGINAGETPEQAMFRELEEEVG).

Belongs to the Nudix hydrolase family. RppH subfamily. A divalent metal cation is required as a cofactor.

Accelerates the degradation of transcripts by removing pyrophosphate from the 5'-end of triphosphorylated RNA, leading to a more labile monophosphorylated state that can stimulate subsequent ribonuclease cleavage. This Thiobacillus denitrificans (strain ATCC 25259 / T1) protein is RNA pyrophosphohydrolase.